A 505-amino-acid polypeptide reads, in one-letter code: Tyrosine-protein kinase isoform SRK1 (505 aa).

2 stretches are compositionally biased toward polar residues: residues 1–10 (MGSCCSSQDG) and 18–31 (AGST…SQSV). The segment at 1–53 (MGSCCSSQDGDGNGKATAGSTVDSHELSQSVKGKIKQPEPKPKPPPQVPPAQD) is disordered. In terms of domain architecture, SH3 spans 54-116 (VKYPIYVGKY…PSNYVAEYKS (63 aa)). An SH2 domain is found at 122–214 (WFLGKIKRVE…GLCCKLLYPC (93 aa)). Positions 240–493 (IKLLRRLGAG…TLQWQLEEFF (254 aa)) constitute a Protein kinase domain. ATP-binding positions include 246–254 (LGAGQFGEV) and lysine 268. Aspartate 359 (proton acceptor) is an active-site residue.

This sequence belongs to the protein kinase superfamily. Tyr protein kinase family. SRC subfamily.

It is found in the cytoplasm. It carries out the reaction L-tyrosyl-[protein] + ATP = O-phospho-L-tyrosyl-[protein] + ADP + H(+). The sequence is that of Tyrosine-protein kinase isoform SRK1 (SRK1) from Spongilla lacustris (Freshwater sponge).